The chain runs to 122 residues: Iron-sulfur cluster assembly protein SufA (122 aa).

Positions 50, 114, and 116 each coordinate [2Fe-2S] cluster. The [4Fe-4S] cluster site is built by C50, C114, and C116.

It belongs to the HesB/IscA family. As to quaternary structure, homodimer. Interacts with SufB and SufC.

Member of gene cluster sufABCDSE that mediates iron-sulfur cluster assembly under oxidative stress and iron limitation conditions. Binds [2Fe-2S] and [4Fe-4S] clusters by mobilizing sulfur atoms provided by the SufS-SufE cysteine desulfurase system and then transfers the assembled Fe-S clusters to target proteins including ferredoxin and aconitase. Seems to act as a Fe-S cluster carrier rather than a scaffold, this role being performed by SufB and SufC. This chain is Iron-sulfur cluster assembly protein SufA (sufA), found in Escherichia coli (strain K12).